A 357-amino-acid chain; its full sequence is Outer membrane porin protein OmpD (357 aa).

The N-terminal stretch at 1–21 (MKLKLVAVAVTTLLAAGAVNA) is a signal peptide.

Belongs to the Gram-negative porin family. Homotrimer.

The protein localises to the cell outer membrane. Functionally, forms pores that allow passive diffusion of small molecules across the outer membrane. The polypeptide is Outer membrane porin protein OmpD (ompD) (Citrobacter koseri (strain ATCC BAA-895 / CDC 4225-83 / SGSC4696)).